The primary structure comprises 318 residues: Pantothenate kinase (318 aa).

Position 96 to 103 (96 to 103 (GSVSVGKS)) interacts with ATP.

The protein belongs to the prokaryotic pantothenate kinase family.

The protein localises to the cytoplasm. The enzyme catalyses (R)-pantothenate + ATP = (R)-4'-phosphopantothenate + ADP + H(+). Its pathway is cofactor biosynthesis; coenzyme A biosynthesis; CoA from (R)-pantothenate: step 1/5. The sequence is that of Pantothenate kinase from Bradyrhizobium sp. (strain ORS 278).